A 101-amino-acid polypeptide reads, in one-letter code: NAD(P)H-quinone oxidoreductase subunit 4L, chloroplastic (101 aa).

A run of 3 helical transmembrane segments spans residues 2–22, 32–52, and 61–81; these read ILEHVLVLSAYLFSIGIYGLI, MCLELILNAVNINFVTFSDFF, and IFSIFVIAIAAAEAAIGLAIV.

It belongs to the complex I subunit 4L family. In terms of assembly, NDH is composed of at least 16 different subunits, 5 of which are encoded in the nucleus.

Its subcellular location is the plastid. It localises to the chloroplast thylakoid membrane. The enzyme catalyses a plastoquinone + NADH + (n+1) H(+)(in) = a plastoquinol + NAD(+) + n H(+)(out). The catalysed reaction is a plastoquinone + NADPH + (n+1) H(+)(in) = a plastoquinol + NADP(+) + n H(+)(out). Functionally, NDH shuttles electrons from NAD(P)H:plastoquinone, via FMN and iron-sulfur (Fe-S) centers, to quinones in the photosynthetic chain and possibly in a chloroplast respiratory chain. The immediate electron acceptor for the enzyme in this species is believed to be plastoquinone. Couples the redox reaction to proton translocation, and thus conserves the redox energy in a proton gradient. In Nicotiana sylvestris (Wood tobacco), this protein is NAD(P)H-quinone oxidoreductase subunit 4L, chloroplastic.